The following is a 308-amino-acid chain: F420-non-reducing hydrogenase subunit G (308 aa).

This sequence belongs to the [NiFe]/[NiFeSe] hydrogenase small subunit family. The F420-non-reducing hydrogenase is composed of three subunits; MvhA, MvhD and MvhG. It forms a complex with the heterodisulfide reductase (hdr).

Functionally, part of a complex that provides reducing equivalents for heterodisulfide reductase. The protein is F420-non-reducing hydrogenase subunit G (mvhG) of Methanothermobacter thermautotrophicus (strain ATCC 29096 / DSM 1053 / JCM 10044 / NBRC 100330 / Delta H) (Methanobacterium thermoautotrophicum).